The sequence spans 151 residues: Putative pre-16S rRNA nuclease (151 aa).

It belongs to the YqgF nuclease family.

The protein resides in the cytoplasm. In terms of biological role, could be a nuclease involved in processing of the 5'-end of pre-16S rRNA. The chain is Putative pre-16S rRNA nuclease from Gloeothece citriformis (strain PCC 7424) (Cyanothece sp. (strain PCC 7424)).